The following is a 783-amino-acid chain: E3 UFM1-protein ligase 1 homolog (783 aa).

Residues 406-476 (TLGTTHDADE…DAVQQSANSS (71 aa)) are disordered. The span at 446–457 (KSTKKHQRGRAA) shows a compositional bias: basic residues.

This sequence belongs to the UFL1 family.

In terms of biological role, E3 UFM1-protein ligase that mediates ufmylation of target proteins. This chain is E3 UFM1-protein ligase 1 homolog, found in Drosophila grimshawi (Hawaiian fruit fly).